Consider the following 382-residue polypeptide: Alanine racemase (382 aa).

Lys37 serves as the catalytic Proton acceptor; specific for D-alanine. N6-(pyridoxal phosphate)lysine is present on Lys37. Arg135 is a substrate binding site. Tyr267 serves as the catalytic Proton acceptor; specific for L-alanine. Met315 contributes to the substrate binding site.

It belongs to the alanine racemase family. Pyridoxal 5'-phosphate is required as a cofactor.

It carries out the reaction L-alanine = D-alanine. It functions in the pathway amino-acid biosynthesis; D-alanine biosynthesis; D-alanine from L-alanine: step 1/1. Its function is as follows. Catalyzes the interconversion of L-alanine and D-alanine. May also act on other amino acids. The chain is Alanine racemase (alr) from Geobacter sulfurreducens (strain ATCC 51573 / DSM 12127 / PCA).